The sequence spans 156 residues: Endoribonuclease YbeY (156 aa).

Zn(2+)-binding residues include His122, His126, and His132.

It belongs to the endoribonuclease YbeY family. The cofactor is Zn(2+).

It is found in the cytoplasm. In terms of biological role, single strand-specific metallo-endoribonuclease involved in late-stage 70S ribosome quality control and in maturation of the 3' terminus of the 16S rRNA. The polypeptide is Endoribonuclease YbeY (Bacillus cereus (strain ATCC 10987 / NRS 248)).